Reading from the N-terminus, the 508-residue chain is Glycerol kinase (508 aa).

Position 14 (Thr-14) interacts with ADP. Positions 14, 15, and 16 each coordinate ATP. Sn-glycerol 3-phosphate is bound at residue Thr-14. ADP is bound at residue Arg-18. Residues Arg-84, Glu-85, and Tyr-136 each contribute to the sn-glycerol 3-phosphate site. The glycerol site is built by Arg-84, Glu-85, and Tyr-136. Position 232 is a phosphohistidine; by HPr (His-232). Asp-246 serves as a coordination point for sn-glycerol 3-phosphate. The glycerol site is built by Asp-246 and Gln-247. ADP-binding residues include Thr-268 and Gly-311. Residues Thr-268, Gly-311, Gln-315, and Gly-412 each contribute to the ATP site. 2 residues coordinate ADP: Gly-412 and Asn-416.

Belongs to the FGGY kinase family. In terms of assembly, homotetramer and homodimer (in equilibrium). Post-translationally, the phosphoenolpyruvate-dependent sugar phosphotransferase system (PTS), including enzyme I, and histidine-containing protein (HPr) are required for the phosphorylation, which leads to the activation of the enzyme.

The enzyme catalyses glycerol + ATP = sn-glycerol 3-phosphate + ADP + H(+). It participates in polyol metabolism; glycerol degradation via glycerol kinase pathway; sn-glycerol 3-phosphate from glycerol: step 1/1. Activated by phosphorylation and inhibited by fructose 1,6-bisphosphate (FBP). In terms of biological role, key enzyme in the regulation of glycerol uptake and metabolism. Catalyzes the phosphorylation of glycerol to yield sn-glycerol 3-phosphate. The sequence is that of Glycerol kinase from Streptococcus pyogenes serotype M3 (strain ATCC BAA-595 / MGAS315).